Here is a 409-residue protein sequence, read N- to C-terminus: Bone morphogenetic protein 4 (409 aa).

The signal sequence occupies residues 1 to 19 (MIPGNRMLMVVLLCQVLLG). Positions 20–293 (GASHASLIPE…ALTRRRRAKR (274 aa)) are excised as a propeptide. A Phosphoserine modification is found at Ser91. Asn144 and Asn209 each carry an N-linked (GlcNAc...) asparagine glycan. The interval 284-308 (ALTRRRRAKRSPKHHPQRARKKNKN) is disordered. Intrachain disulfides connect Cys309-Cys374, Cys338-Cys406, and Cys342-Cys408. Asn351 and Asn366 each carry an N-linked (GlcNAc...) asparagine glycan.

The protein belongs to the TGF-beta family. As to quaternary structure, homodimer; disulfide-linked. Interacts with GREM2. Part of a complex consisting of TWSG1 and CHRD. Interacts with the serine proteases, HTRA1 and HTRA3; the interaction with either inhibits BMP4-mediated signaling. The HTRA protease activity is required for this inhibition. Interacts with SOSTDC1. Interacts with FBN1 (via N-terminal domain) and FBN2. Interacts with type I receptor BMPR1A. Interacts with type II receptor BMPR2. Interacts with FSTL1; this interaction inhibits the activation of the BMP4/Smad1/5/8 signaling pathway. Interacts with TGFBR3.

It localises to the secreted. The protein localises to the extracellular space. Its subcellular location is the extracellular matrix. Growth factor of the TGF-beta superfamily that plays essential roles in many developmental processes, including neurogenesis, vascular development, angiogenesis and osteogenesis. Acts in concert with PTHLH/PTHRP to stimulate ductal outgrowth during embryonic mammary development and to inhibit hair follicle induction. Initiates the canonical BMP signaling cascade by associating with type I receptor BMPR1A and type II receptor BMPR2. Once all three components are bound together in a complex at the cell surface, BMPR2 phosphorylates and activates BMPR1A. In turn, BMPR1A propagates signal by phosphorylating SMAD1/5/8 that travel to the nucleus and act as activators and repressors of transcription of target genes. Positively regulates the expression of odontogenic development regulator MSX1 via inducing the IPO7-mediated import of SMAD1 to the nucleus. Required for MSX1-mediated mesenchymal molar tooth bud development beyond the bud stage, via promoting Wnt signaling. Acts as a positive regulator of odontoblast differentiation during mesenchymal tooth germ formation, expression is repressed during the bell stage by MSX1-mediated inhibition of CTNNB1 signaling. Able to induce its own expression in dental mesenchymal cells and also in the neighboring dental epithelial cells via an MSX1-mediated pathway. Can also signal through non-canonical BMP pathways such as ERK/MAP kinase, PI3K/Akt, or SRC cascades. For example, induces SRC phosphorylation which, in turn, activates VEGFR2, leading to an angiogenic response. This Suncus murinus (Asian house shrew) protein is Bone morphogenetic protein 4.